Here is a 172-residue protein sequence, read N- to C-terminus: Adenine phosphoribosyltransferase (172 aa).

It belongs to the purine/pyrimidine phosphoribosyltransferase family. In terms of assembly, homodimer.

The protein localises to the cytoplasm. The enzyme catalyses AMP + diphosphate = 5-phospho-alpha-D-ribose 1-diphosphate + adenine. It participates in purine metabolism; AMP biosynthesis via salvage pathway; AMP from adenine: step 1/1. Catalyzes a salvage reaction resulting in the formation of AMP, that is energically less costly than de novo synthesis. The sequence is that of Adenine phosphoribosyltransferase from Gloeothece citriformis (strain PCC 7424) (Cyanothece sp. (strain PCC 7424)).